Consider the following 786-residue polypeptide: LPS-assembly protein LptD (786 aa).

Residues methionine 1–alanine 24 form the signal peptide. Intrachain disulfides connect cysteine 31–cysteine 726 and cysteine 173–cysteine 727.

Belongs to the LptD family. Component of the lipopolysaccharide transport and assembly complex. Interacts with LptE and LptA. In terms of processing, contains two intramolecular disulfide bonds.

It localises to the cell outer membrane. Together with LptE, is involved in the assembly of lipopolysaccharide (LPS) at the surface of the outer membrane. This chain is LPS-assembly protein LptD, found in Salmonella choleraesuis (strain SC-B67).